Consider the following 192-residue polypeptide: Imidazoleglycerol-phosphate dehydratase (192 aa).

This sequence belongs to the imidazoleglycerol-phosphate dehydratase family.

The protein localises to the cytoplasm. The enzyme catalyses D-erythro-1-(imidazol-4-yl)glycerol 3-phosphate = 3-(imidazol-4-yl)-2-oxopropyl phosphate + H2O. It functions in the pathway amino-acid biosynthesis; L-histidine biosynthesis; L-histidine from 5-phospho-alpha-D-ribose 1-diphosphate: step 6/9. The polypeptide is Imidazoleglycerol-phosphate dehydratase (Staphylococcus aureus (strain MRSA252)).